Reading from the N-terminus, the 378-residue chain is Small ribosomal subunit protein bS1 (378 aa).

5 S1 motif domains span residues 1-66 (ETVT…VSRR), 87-155 (GMEV…LGLK), 172-242 (GTKL…LGLK), 259-329 (GDRV…LGVK), and 346-378 (GAIV…ASEA).

This sequence belongs to the bacterial ribosomal protein bS1 family.

Binds mRNA; thus facilitating recognition of the initiation point. It is needed to translate mRNA with a short Shine-Dalgarno (SD) purine-rich sequence. In Providencia sp, this protein is Small ribosomal subunit protein bS1 (rpsA).